We begin with the raw amino-acid sequence, 84 residues long: Cell division topological specificity factor (84 aa).

This sequence belongs to the MinE family.

Prevents the cell division inhibition by proteins MinC and MinD at internal division sites while permitting inhibition at polar sites. This ensures cell division at the proper site by restricting the formation of a division septum at the midpoint of the long axis of the cell. The chain is Cell division topological specificity factor from Paraburkholderia phymatum (strain DSM 17167 / CIP 108236 / LMG 21445 / STM815) (Burkholderia phymatum).